Consider the following 400-residue polypeptide: Cysteine desulfurase (400 aa).

Pyridoxal 5'-phosphate is bound by residues 71 to 72, N150, Q178, and 198 to 200; these read GT and SGH. K201 carries the post-translational modification N6-(pyridoxal phosphate)lysine. T236 serves as a coordination point for pyridoxal 5'-phosphate. C324 acts as the Cysteine persulfide intermediate in catalysis. C324 lines the [2Fe-2S] cluster pocket.

Belongs to the class-V pyridoxal-phosphate-dependent aminotransferase family. NifS/IscS subfamily. As to quaternary structure, homodimer. Requires pyridoxal 5'-phosphate as cofactor.

The catalysed reaction is (sulfur carrier)-H + L-cysteine = (sulfur carrier)-SH + L-alanine. Catalyzes the removal of elemental sulfur atoms from cysteine to produce alanine. Seems to participate in the biosynthesis of the nitrogenase metalloclusters by providing the inorganic sulfur required for the Fe-S core formation. In Nostoc sp. (strain PCC 7120 / SAG 25.82 / UTEX 2576), this protein is Cysteine desulfurase.